Here is a 167-residue protein sequence, read N- to C-terminus: MAEITFKGGPVTLVGQEVKVGDQAPDFTVLTNSLEEKSLADMKGKVTIISVIPSIDTGVCDAQTRRFNEEAAKLGDVNVYTISADLPFAQARWCGANGIDKVETLSDHRDMSFGEAFGVYIKELRLLARSVFVLDENGKVVYAEYVSEATNHPNYEKPIEAAKALVK.

The Thioredoxin domain occupies 18-167; sequence VKVGDQAPDF…PIEAAKALVK (150 aa). Cysteine 60 (cysteine sulfenic acid (-SOH) intermediate) is an active-site residue. A disulfide bridge links cysteine 60 with cysteine 94.

Belongs to the peroxiredoxin family. Tpx subfamily. As to quaternary structure, homodimer.

The enzyme catalyses a hydroperoxide + [thioredoxin]-dithiol = an alcohol + [thioredoxin]-disulfide + H2O. Thiol-specific peroxidase that catalyzes the reduction of hydrogen peroxide and organic hydroperoxides to water and alcohols, respectively. Plays a role in cell protection against oxidative stress by detoxifying peroxides. The sequence is that of Thiol peroxidase from Bacillus subtilis (strain 168).